The following is a 146-amino-acid chain: Hemoglobin subunit beta (146 aa).

Residue V1 is modified to N-acetylvaline. The 145-residue stretch at 2–146 (ELTAEEKAAV…VANALAHKYH (145 aa)) folds into the Globin domain. S44 bears the Phosphoserine mark. K59 carries the post-translational modification N6-acetyllysine. H63 contacts heme b. An N6-acetyllysine modification is found at K82. Heme b is bound at residue H92. C93 bears the S-nitrosocysteine mark. At K144 the chain carries N6-acetyllysine.

Belongs to the globin family. In terms of assembly, heterotetramer of two alpha chains and two beta chains. In terms of tissue distribution, red blood cells.

Its function is as follows. Involved in oxygen transport from the lung to the various peripheral tissues. This Ceratotherium simum (White rhinoceros) protein is Hemoglobin subunit beta (HBB).